Reading from the N-terminus, the 57-residue chain is DNA-directed RNA polymerase subunit Rpo6 (57 aa).

The protein belongs to the archaeal Rpo6/eukaryotic RPB6 RNA polymerase subunit family. In terms of assembly, part of the RNA polymerase complex.

Its subcellular location is the cytoplasm. It carries out the reaction RNA(n) + a ribonucleoside 5'-triphosphate = RNA(n+1) + diphosphate. In terms of biological role, DNA-dependent RNA polymerase (RNAP) catalyzes the transcription of DNA into RNA using the four ribonucleoside triphosphates as substrates. The polypeptide is DNA-directed RNA polymerase subunit Rpo6 (Haloarcula marismortui (strain ATCC 43049 / DSM 3752 / JCM 8966 / VKM B-1809) (Halobacterium marismortui)).